The sequence spans 361 residues: D-alanine--D-alanine ligase (361 aa).

Positions 134 to 344 constitute an ATP-grasp domain; sequence KLLLKSFNIP…FKDLIDNLID (211 aa). 167–222 serves as a coordination point for ATP; the sequence is KEVLGYPVIVKPAVLGSSIGINVAYSENQIESCIEEALKYDLTIVIEKFIEAREIE. Mg(2+)-binding residues include Asp297, Glu311, and Asn313.

The protein belongs to the D-alanine--D-alanine ligase family. The cofactor is Mg(2+). Requires Mn(2+) as cofactor.

It is found in the cytoplasm. The enzyme catalyses 2 D-alanine + ATP = D-alanyl-D-alanine + ADP + phosphate + H(+). It participates in cell wall biogenesis; peptidoglycan biosynthesis. Its function is as follows. Cell wall formation. This is D-alanine--D-alanine ligase from Borreliella afzelii (strain PKo) (Borrelia afzelii).